The sequence spans 52 residues: DNA import protein CedA2 (52 aa).

The next 2 membrane-spanning stretches (helical) occupy residues methionine 1–tyrosine 21 and isoleucine 27–glutamate 47.

In terms of assembly, forms a complex composed of CedA, CedA1 and CedA2.

The protein resides in the cell membrane. Functionally, part of the Ced system, which is involved in DNA import. This chain is DNA import protein CedA2, found in Sulfolobus acidocaldarius (strain ATCC 33909 / DSM 639 / JCM 8929 / NBRC 15157 / NCIMB 11770).